The chain runs to 351 residues: N(4)-bis(aminopropyl)spermidine synthase (351 aa).

It belongs to the branched-chain polyamine synthase family.

It localises to the cytoplasm. The catalysed reaction is 2 S-adenosyl 3-(methylsulfanyl)propylamine + spermidine = N(4)-bis(aminopropyl)spermidine + 2 S-methyl-5'-thioadenosine + 2 H(+). Its pathway is amine and polyamine biosynthesis. Involved in the biosynthesis of branched-chain polyamines, which support the growth of thermophiles under high-temperature conditions. Catalyzes the sequential condensation of spermidine with the aminopropyl groups of decarboxylated S-adenosylmethionines to produce N(4)-bis(aminopropyl)spermidine via N(4)-aminopropylspermidine. Can also use spermine to produce N(4)-aminopropylspermine. The polypeptide is N(4)-bis(aminopropyl)spermidine synthase (Thermococcus kodakarensis (strain ATCC BAA-918 / JCM 12380 / KOD1) (Pyrococcus kodakaraensis (strain KOD1))).